We begin with the raw amino-acid sequence, 913 residues long: Probable TonB-dependent receptor HI_1217 (913 aa).

The first 27 residues, 1-27 (MKKAIKLNLITLGLINTIGMTITQAQA), serve as a signal peptide directing secretion. The TBDR plug domain maps to 42–165 (SNDKKPFTEA…LAGSANFRTL (124 aa)). In terms of domain architecture, TBDR beta-barrel spans 176–913 (PFGIILKGMT…TYILSLNYKF (738 aa)). The TonB C-terminal box signature appears at 896 to 913 (LYNFARGRTYILSLNYKF).

This sequence belongs to the TonB-dependent receptor family.

The protein resides in the cell outer membrane. Probable receptor, TonB-dependent. The protein is Probable TonB-dependent receptor HI_1217 of Haemophilus influenzae (strain ATCC 51907 / DSM 11121 / KW20 / Rd).